We begin with the raw amino-acid sequence, 388 residues long: Chorismate synthase (388 aa).

Positions 39 and 45 each coordinate NADP(+). FMN contacts are provided by residues 130-132, 251-252, glycine 296, 311-315, and arginine 337; these read RSS, NA, and KPIPT.

It belongs to the chorismate synthase family. As to quaternary structure, homotetramer. It depends on FMNH2 as a cofactor.

The enzyme catalyses 5-O-(1-carboxyvinyl)-3-phosphoshikimate = chorismate + phosphate. The protein operates within metabolic intermediate biosynthesis; chorismate biosynthesis; chorismate from D-erythrose 4-phosphate and phosphoenolpyruvate: step 7/7. Functionally, catalyzes the anti-1,4-elimination of the C-3 phosphate and the C-6 proR hydrogen from 5-enolpyruvylshikimate-3-phosphate (EPSP) to yield chorismate, which is the branch point compound that serves as the starting substrate for the three terminal pathways of aromatic amino acid biosynthesis. This reaction introduces a second double bond into the aromatic ring system. This chain is Chorismate synthase, found in Lactococcus lactis subsp. cremoris (strain SK11).